The chain runs to 448 residues: Squalene synthase ERG9 (448 aa).

The helical transmembrane segment at 420–440 threads the bilayer; the sequence is RIEPGNFNCNVVLFGIGALIL.

It belongs to the phytoene/squalene synthase family. Mg(2+) serves as cofactor.

Its subcellular location is the endoplasmic reticulum membrane. It is found in the microsome. It carries out the reaction 2 (2E,6E)-farnesyl diphosphate + NADPH + H(+) = squalene + 2 diphosphate + NADP(+). The catalysed reaction is 2 (2E,6E)-farnesyl diphosphate + NADH + H(+) = squalene + 2 diphosphate + NAD(+). It functions in the pathway terpene metabolism; lanosterol biosynthesis; lanosterol from farnesyl diphosphate: step 1/3. Its function is as follows. Squalene synthase; part of the third module of ergosterol biosynthesis pathway that includes the late steps of the pathway. ERG9 produces squalene from 2 farnesyl pyrophosphate moieties. The third module or late pathway involves the ergosterol synthesis itself through consecutive reactions that mainly occur in the endoplasmic reticulum (ER) membrane. Firstly, the squalene synthase ERG9 catalyzes the condensation of 2 farnesyl pyrophosphate moieties to form squalene, which is the precursor of all steroids. Squalene synthase is crucial for balancing the incorporation of farnesyl diphosphate (FPP) into sterol and nonsterol isoprene synthesis. Secondly, the squalene epoxidase ERG1 catalyzes the stereospecific oxidation of squalene to (S)-2,3-epoxysqualene, which is considered to be a rate-limiting enzyme in steroid biosynthesis. Then, the lanosterol synthase ERG7 catalyzes the cyclization of (S)-2,3 oxidosqualene to lanosterol, a reaction that forms the sterol core. In the next steps, lanosterol is transformed to zymosterol through a complex process involving various demethylation, reduction and desaturation reactions. The lanosterol 14-alpha-demethylase ERG11 (also known as CYP51) catalyzes C14-demethylation of lanosterol to produce 4,4'-dimethyl cholesta-8,14,24-triene-3-beta-ol, which is critical for ergosterol biosynthesis. The C-14 reductase ERG24 reduces the C14=C15 double bond of 4,4-dimethyl-cholesta-8,14,24-trienol to produce 4,4-dimethyl-cholesta-8,24-dienol. 4,4-dimethyl-cholesta-8,24-dienol is substrate of the C-4 demethylation complex ERG25-ERG26-ERG27 in which ERG25 catalyzes the three-step monooxygenation required for the demethylation of 4,4-dimethyl and 4alpha-methylsterols, ERG26 catalyzes the oxidative decarboxylation that results in a reduction of the 3-beta-hydroxy group at the C-3 carbon to an oxo group, and ERG27 is responsible for the reduction of the keto group on the C-3. ERG28 has a role as a scaffold to help anchor ERG25, ERG26 and ERG27 to the endoplasmic reticulum and ERG29 regulates the activity of the iron-containing C4-methylsterol oxidase ERG25. Then, the sterol 24-C-methyltransferase ERG6 catalyzes the methyl transfer from S-adenosyl-methionine to the C-24 of zymosterol to form fecosterol. The C-8 sterol isomerase ERG2 catalyzes the reaction which results in unsaturation at C-7 in the B ring of sterols and thus converts fecosterol to episterol. The sterol-C5-desaturase ERG3 then catalyzes the introduction of a C-5 double bond in the B ring to produce 5-dehydroepisterol. The C-22 sterol desaturase ERG5 further converts 5-dehydroepisterol into ergosta-5,7,22,24(28)-tetraen-3beta-ol by forming the C-22(23) double bond in the sterol side chain. Finally, ergosta-5,7,22,24(28)-tetraen-3beta-ol is substrate of the C-24(28) sterol reductase ERG4 to produce ergosterol. The protein is Squalene synthase ERG9 of Candida albicans (Yeast).